We begin with the raw amino-acid sequence, 55 residues long: uncharacterized protein (55 aa).

This is an uncharacterized protein from Homo sapiens (Human).